We begin with the raw amino-acid sequence, 593 residues long: UvrABC system protein C (593 aa).

A GIY-YIG domain is found at 14 to 91 (DKPGCYLMKN…IKEHDPRYNV (78 aa)). The UVR domain maps to 196–231 (EEMKQTLTEKMLQAAENMEFERAKEYRDQIKSIEAV).

Belongs to the UvrC family. As to quaternary structure, interacts with UvrB in an incision complex.

It localises to the cytoplasm. In terms of biological role, the UvrABC repair system catalyzes the recognition and processing of DNA lesions. UvrC both incises the 5' and 3' sides of the lesion. The N-terminal half is responsible for the 3' incision and the C-terminal half is responsible for the 5' incision. The sequence is that of UvrABC system protein C from Brevibacillus brevis (strain 47 / JCM 6285 / NBRC 100599).